The chain runs to 351 residues: Probable NADP-dependent isopropanol dehydrogenase (351 aa).

Residues cysteine 37, histidine 59, glutamate 60, and aspartate 150 each coordinate Zn(2+). NADP(+) contacts are provided by residues alanine 175–valine 178, aspartate 198–arginine 200, valine 265–tyrosine 267, and lysine 340.

The protein belongs to the zinc-containing alcohol dehydrogenase family. Zn(2+) serves as cofactor.

The catalysed reaction is propan-2-ol + NADP(+) = acetone + NADPH + H(+). In terms of biological role, alcohol dehydrogenase with a preference for medium chain secondary alcohols, such as 2-butanol and isopropanol. Has very low activity with primary alcohols, such as ethanol. Under physiological conditions, the enzyme reduces aldehydes and 2-ketones to produce secondary alcohols. Is also active with acetaldehyde and propionaldehyde. This Mycoplasma pneumoniae (strain ATCC 29342 / M129 / Subtype 1) (Mycoplasmoides pneumoniae) protein is Probable NADP-dependent isopropanol dehydrogenase (adh).